We begin with the raw amino-acid sequence, 206 residues long: Small ribosomal subunit protein uS4 (206 aa).

Positions 27 to 47 (PSESKCNMNAAPGQHGGRRGR) are disordered. The region spanning 96–158 (QRLDNVVYRM…SRKQIRIQSA (63 aa)) is the S4 RNA-binding domain.

Belongs to the universal ribosomal protein uS4 family. As to quaternary structure, part of the 30S ribosomal subunit. Contacts protein S5. The interaction surface between S4 and S5 is involved in control of translational fidelity.

In terms of biological role, one of the primary rRNA binding proteins, it binds directly to 16S rRNA where it nucleates assembly of the body of the 30S subunit. Its function is as follows. With S5 and S12 plays an important role in translational accuracy. The polypeptide is Small ribosomal subunit protein uS4 (Dichelobacter nodosus (strain VCS1703A)).